We begin with the raw amino-acid sequence, 37 residues long: Large ribosomal subunit protein bL36 (37 aa).

It belongs to the bacterial ribosomal protein bL36 family.

The sequence is that of Large ribosomal subunit protein bL36 from Aquifex aeolicus (strain VF5).